A 206-amino-acid polypeptide reads, in one-letter code: Tektin bundle-interacting protein 1 (206 aa).

Microtubule inner protein component of sperm flagellar doublet microtubules.

Its subcellular location is the cytoplasm. The protein resides in the cytoskeleton. It localises to the cilium axoneme. It is found in the flagellum axoneme. In terms of biological role, microtubule inner protein (MIP) part of the dynein-decorated doublet microtubules (DMTs) in cilia axoneme, which is required for motile cilia beating. Located at the center of the tektin bundle where may function to recruit tektins or stabilize the bundle. In Mus musculus (Mouse), this protein is Tektin bundle-interacting protein 1.